Consider the following 293-residue polypeptide: Nucleotide-binding protein HRM2_27900 (293 aa).

11–18 (GLSGSGKS) is a binding site for ATP. 62 to 65 (DIRA) is a binding site for GTP.

Belongs to the RapZ-like family.

Its function is as follows. Displays ATPase and GTPase activities. The polypeptide is Nucleotide-binding protein HRM2_27900 (Desulforapulum autotrophicum (strain ATCC 43914 / DSM 3382 / VKM B-1955 / HRM2) (Desulfobacterium autotrophicum)).